We begin with the raw amino-acid sequence, 238 residues long: Purine nucleoside phosphorylase DeoD-type (238 aa).

His4 contacts a purine D-ribonucleoside. Phosphate-binding positions include Gly20, Arg24, Arg43, and 87-90; that span reads RVGS. A purine D-ribonucleoside-binding positions include 179-181 and 203-204; these read EME and SD. Catalysis depends on Asp204, which acts as the Proton donor.

Belongs to the PNP/UDP phosphorylase family. Homohexamer; trimer of homodimers.

It catalyses the reaction a purine D-ribonucleoside + phosphate = a purine nucleobase + alpha-D-ribose 1-phosphate. It carries out the reaction a purine 2'-deoxy-D-ribonucleoside + phosphate = a purine nucleobase + 2-deoxy-alpha-D-ribose 1-phosphate. Its function is as follows. Catalyzes the reversible phosphorolytic breakdown of the N-glycosidic bond in the beta-(deoxy)ribonucleoside molecules, with the formation of the corresponding free purine bases and pentose-1-phosphate. The protein is Purine nucleoside phosphorylase DeoD-type of Haemophilus influenzae (strain PittGG).